Here is a 699-residue protein sequence, read N- to C-terminus: D-(-)-3-hydroxybutyrate oligomer hydrolase (699 aa).

Positions 1-33 (MTAIRGGSRRAPGLALALLGGVLLGACHGDENA) are cleaved as a signal peptide. Serine 311 serves as the catalytic Charge relay system.

The protein belongs to the D-(-)-3-hydroxybutyrate oligomer hydrolase family.

It localises to the secreted. It carries out the reaction (3R)-hydroxybutanoate dimer + H2O = 2 (R)-3-hydroxybutanoate + H(+). Its pathway is lipid metabolism; butanoate metabolism. Functionally, participates in the degradation of poly-3-hydroxybutyrate (PHB). It works downstream of poly(3-hydroxybutyrate) depolymerase, hydrolyzing D(-)-3-hydroxybutyrate oligomers of various length (3HB-oligomers) into 3HB-monomers. In Burkholderia mallei (strain NCTC 10247), this protein is D-(-)-3-hydroxybutyrate oligomer hydrolase.